We begin with the raw amino-acid sequence, 174 residues long: Pediocin PA-1 biosynthesis protein PedC (174 aa).

Its function is as follows. Probably involved in pediocin PA-1 biosynthesis. This Pediococcus acidilactici protein is Pediocin PA-1 biosynthesis protein PedC (pedC).